The following is a 149-amino-acid chain: D-aminoacyl-tRNA deacylase (149 aa).

A Gly-cisPro motif, important for rejection of L-amino acids motif is present at residues 138 to 139 (GP).

It belongs to the DTD family. As to quaternary structure, homodimer.

The protein localises to the cytoplasm. The enzyme catalyses glycyl-tRNA(Ala) + H2O = tRNA(Ala) + glycine + H(+). The catalysed reaction is a D-aminoacyl-tRNA + H2O = a tRNA + a D-alpha-amino acid + H(+). Functionally, an aminoacyl-tRNA editing enzyme that deacylates mischarged D-aminoacyl-tRNAs. Also deacylates mischarged glycyl-tRNA(Ala), protecting cells against glycine mischarging by AlaRS. Acts via tRNA-based rather than protein-based catalysis; rejects L-amino acids rather than detecting D-amino acids in the active site. By recycling D-aminoacyl-tRNA to D-amino acids and free tRNA molecules, this enzyme counteracts the toxicity associated with the formation of D-aminoacyl-tRNA entities in vivo and helps enforce protein L-homochirality. This Chlorobaculum parvum (strain DSM 263 / NCIMB 8327) (Chlorobium vibrioforme subsp. thiosulfatophilum) protein is D-aminoacyl-tRNA deacylase.